We begin with the raw amino-acid sequence, 180 residues long: UPF0227 protein ECA1814 (180 aa).

It belongs to the UPF0227 family.

This is UPF0227 protein ECA1814 from Pectobacterium atrosepticum (strain SCRI 1043 / ATCC BAA-672) (Erwinia carotovora subsp. atroseptica).